The chain runs to 309 residues: Homoserine kinase (309 aa).

Residue 91–101 (PIGSGLGSSAC) coordinates ATP.

It belongs to the GHMP kinase family. Homoserine kinase subfamily.

It is found in the cytoplasm. The catalysed reaction is L-homoserine + ATP = O-phospho-L-homoserine + ADP + H(+). The protein operates within amino-acid biosynthesis; L-threonine biosynthesis; L-threonine from L-aspartate: step 4/5. Catalyzes the ATP-dependent phosphorylation of L-homoserine to L-homoserine phosphate. The sequence is that of Homoserine kinase from Photorhabdus laumondii subsp. laumondii (strain DSM 15139 / CIP 105565 / TT01) (Photorhabdus luminescens subsp. laumondii).